A 599-amino-acid polypeptide reads, in one-letter code: Elongation factor 4 (599 aa).

Residues 5-187 form the tr-type G domain; it reads SHIRNFSIIA…RLVHTIPAPV (183 aa). GTP-binding positions include 17 to 22 and 134 to 137; these read DHGKST and NKMD.

The protein belongs to the TRAFAC class translation factor GTPase superfamily. Classic translation factor GTPase family. LepA subfamily.

The protein localises to the cell inner membrane. The catalysed reaction is GTP + H2O = GDP + phosphate + H(+). Required for accurate and efficient protein synthesis under certain stress conditions. May act as a fidelity factor of the translation reaction, by catalyzing a one-codon backward translocation of tRNAs on improperly translocated ribosomes. Back-translocation proceeds from a post-translocation (POST) complex to a pre-translocation (PRE) complex, thus giving elongation factor G a second chance to translocate the tRNAs correctly. Binds to ribosomes in a GTP-dependent manner. This chain is Elongation factor 4, found in Pseudomonas putida (strain W619).